The sequence spans 60 residues: UPF0434 protein Pnap_1922 (60 aa).

Belongs to the UPF0434 family.

The sequence is that of UPF0434 protein Pnap_1922 from Polaromonas naphthalenivorans (strain CJ2).